We begin with the raw amino-acid sequence, 364 residues long: Mitoferrin-2 (364 aa).

The span at 1–17 (MELEGRGAGGVAGGPAA) shows a compositional bias: gly residues. Disordered stretches follow at residues 1-28 (MELE…ESAL) and 40-60 (GAGG…PDSG). Residues 18–27 (GPGRSPGESA) show a composition bias toward low complexity. 3 Solcar repeats span residues 70–158 (ATVT…LKKT), 168–252 (NSHI…LQEH), and 259–352 (YNPS…FKYL). The next 6 helical transmembrane spans lie at 72 to 91 (VTTH…CVMY), 133 to 152 (GLNV…FACY), 170 to 189 (HIAN…AAMN), 227 to 246 (SYTT…FMTY), 261 to 280 (PSSH…AATT), and 327 to 346 (GVQA…WSVY).

This sequence belongs to the mitochondrial carrier (TC 2.A.29) family. Ubiquitous. Expressed in placenta, lung, kidney, pancreas, liver, brain, skeletal muscle and heart.

The protein localises to the mitochondrion inner membrane. It catalyses the reaction Fe(2+)(in) = Fe(2+)(out). Its function is as follows. Mitochondrial iron transporter that mediates iron uptake. Probably required for heme synthesis of hemoproteins and Fe-S cluster assembly in non-erythroid cells. The chain is Mitoferrin-2 (SLC25A28) from Homo sapiens (Human).